The sequence spans 172 residues: Transcription factor E (172 aa).

Residues 8–90 form the HTH TFE/IIEalpha-type domain; the sequence is DDPVVQKYLH…LWTFQYENVP (83 aa).

It belongs to the TFE family. As to quaternary structure, monomer. Interaction with RNA polymerase subunits RpoF and RpoE is necessary for Tfe stimulatory transcription activity. Able to interact with Tbp and RNA polymerase in the absence of DNA promoter. Interacts both with the preinitiation and elongation complexes.

Functionally, transcription factor that plays a role in the activation of archaeal genes transcribed by RNA polymerase. Facilitates transcription initiation by enhancing TATA-box recognition by TATA-box-binding protein (Tbp), and transcription factor B (Tfb) and RNA polymerase recruitment. Not absolutely required for transcription in vitro, but particularly important in cases where Tbp or Tfb function is not optimal. It dynamically alters the nucleic acid-binding properties of RNA polymerases by stabilizing the initiation complex and destabilizing elongation complexes. Seems to translocate with the RNA polymerase following initiation and acts by binding to the non template strand of the transcription bubble in elongation complexes. In Halobacterium salinarum (strain ATCC 700922 / JCM 11081 / NRC-1) (Halobacterium halobium), this protein is Transcription factor E.